The sequence spans 318 residues: Dual specificity protein phosphatase 2 (318 aa).

A Rhodanese domain is found at 27–148 (EAERTLLLDC…FQTYCPDLCS (122 aa)). Residues 176 to 317 (GPVEILPYLY…LLQLETQVLC (142 aa)) form the Tyrosine-protein phosphatase domain. C261 functions as the Phosphocysteine intermediate in the catalytic mechanism.

Belongs to the protein-tyrosine phosphatase family. Non-receptor class dual specificity subfamily. Interacts with MAPK14; this interaction does not lead to catalytic activation of DUSP2 and dephosphrylation of MAPK14. In hematopoietic tissues such as spleen and thymus.

The protein resides in the nucleus. The enzyme catalyses O-phospho-L-tyrosyl-[protein] + H2O = L-tyrosyl-[protein] + phosphate. The catalysed reaction is O-phospho-L-threonyl-[protein] + H2O = L-threonyl-[protein] + phosphate. In terms of biological role, dephosphorylates both phosphorylated Thr and Tyr residues in MAPK1, and dephosphorylation of phosphotyrosine is slightly faster than that of phosphothreonine. Can dephosphorylate MAPK1. This Mus musculus (Mouse) protein is Dual specificity protein phosphatase 2.